A 335-amino-acid polypeptide reads, in one-letter code: Holliday junction branch migration complex subunit RuvB (335 aa).

A large ATPase domain (RuvB-L) region spans residues 1-183 (MDERIISSET…FGVIDHLEFY (183 aa)). ATP-binding positions include leucine 22, arginine 23, glycine 64, lysine 67, threonine 68, threonine 69, 130-132 (EDY), arginine 173, tyrosine 183, and arginine 220. Threonine 68 is a Mg(2+) binding site. Residues 184 to 254 (TEEQLTEIVL…LAKEALTLLQ (71 aa)) are small ATPAse domain (RuvB-S). The head domain (RuvB-H) stretch occupies residues 257–335 (PRGLDTIDQK…HLGISYEKEV (79 aa)). Residues arginine 293, arginine 312, and arginine 317 each coordinate DNA.

This sequence belongs to the RuvB family. Homohexamer. Forms an RuvA(8)-RuvB(12)-Holliday junction (HJ) complex. HJ DNA is sandwiched between 2 RuvA tetramers; dsDNA enters through RuvA and exits via RuvB. An RuvB hexamer assembles on each DNA strand where it exits the tetramer. Each RuvB hexamer is contacted by two RuvA subunits (via domain III) on 2 adjacent RuvB subunits; this complex drives branch migration. In the full resolvosome a probable DNA-RuvA(4)-RuvB(12)-RuvC(2) complex forms which resolves the HJ.

The protein resides in the cytoplasm. It catalyses the reaction ATP + H2O = ADP + phosphate + H(+). Its function is as follows. The RuvA-RuvB-RuvC complex processes Holliday junction (HJ) DNA during genetic recombination and DNA repair, while the RuvA-RuvB complex plays an important role in the rescue of blocked DNA replication forks via replication fork reversal (RFR). RuvA specifically binds to HJ cruciform DNA, conferring on it an open structure. The RuvB hexamer acts as an ATP-dependent pump, pulling dsDNA into and through the RuvAB complex. RuvB forms 2 homohexamers on either side of HJ DNA bound by 1 or 2 RuvA tetramers; 4 subunits per hexamer contact DNA at a time. Coordinated motions by a converter formed by DNA-disengaged RuvB subunits stimulates ATP hydrolysis and nucleotide exchange. Immobilization of the converter enables RuvB to convert the ATP-contained energy into a lever motion, pulling 2 nucleotides of DNA out of the RuvA tetramer per ATP hydrolyzed, thus driving DNA branch migration. The RuvB motors rotate together with the DNA substrate, which together with the progressing nucleotide cycle form the mechanistic basis for DNA recombination by continuous HJ branch migration. Branch migration allows RuvC to scan DNA until it finds its consensus sequence, where it cleaves and resolves cruciform DNA. This Listeria welshimeri serovar 6b (strain ATCC 35897 / DSM 20650 / CCUG 15529 / CIP 8149 / NCTC 11857 / SLCC 5334 / V8) protein is Holliday junction branch migration complex subunit RuvB.